The primary structure comprises 673 residues: UPF0313 protein blr7973 (673 aa).

The Radical SAM core domain occupies 332 to 611; it reads AWDMIKFSVT…KAFLRYHDPD (280 aa). Residues Cys-346, Cys-350, and Cys-353 each coordinate [4Fe-4S] cluster. Residues 632–673 are disordered; it reads RPDQLVPAHQPPGTGKAAGTRRPVRPGGKTQRFTTKGLRVMK.

Belongs to the UPF0313 family. The cofactor is [4Fe-4S] cluster.

The polypeptide is UPF0313 protein blr7973 (Bradyrhizobium diazoefficiens (strain JCM 10833 / BCRC 13528 / IAM 13628 / NBRC 14792 / USDA 110)).